A 273-amino-acid chain; its full sequence is Large ribosomal subunit protein uL2 (273 aa).

The disordered stretch occupies residues 228–273 (VDHPHGGGEGKTSGGRHPVTPWGFPTKGKKTRKNKRTSKFIIKKRK). Basic residues predominate over residues 254 to 273 (KGKKTRKNKRTSKFIIKKRK).

It belongs to the universal ribosomal protein uL2 family. As to quaternary structure, part of the 50S ribosomal subunit. Forms a bridge to the 30S subunit in the 70S ribosome.

Its function is as follows. One of the primary rRNA binding proteins. Required for association of the 30S and 50S subunits to form the 70S ribosome, for tRNA binding and peptide bond formation. It has been suggested to have peptidyltransferase activity; this is somewhat controversial. Makes several contacts with the 16S rRNA in the 70S ribosome. This Rickettsia bellii (strain OSU 85-389) protein is Large ribosomal subunit protein uL2.